The following is a 215-amino-acid chain: Histidine biosynthesis bifunctional protein HisIE (215 aa).

The phosphoribosyl-AMP cyclohydrolase stretch occupies residues 1 to 114 (MLKKHDLLNL…FISNKYNINF (114 aa)). The tract at residues 115-215 (LFKLEEIIEE…LNTNSEKLLK (101 aa)) is phosphoribosyl-ATP pyrophosphohydrolase.

It in the N-terminal section; belongs to the PRA-CH family. In the C-terminal section; belongs to the PRA-PH family.

It is found in the cytoplasm. The catalysed reaction is 1-(5-phospho-beta-D-ribosyl)-ATP + H2O = 1-(5-phospho-beta-D-ribosyl)-5'-AMP + diphosphate + H(+). It catalyses the reaction 1-(5-phospho-beta-D-ribosyl)-5'-AMP + H2O = 1-(5-phospho-beta-D-ribosyl)-5-[(5-phospho-beta-D-ribosylamino)methylideneamino]imidazole-4-carboxamide. It functions in the pathway amino-acid biosynthesis; L-histidine biosynthesis; L-histidine from 5-phospho-alpha-D-ribose 1-diphosphate: step 2/9. The protein operates within amino-acid biosynthesis; L-histidine biosynthesis; L-histidine from 5-phospho-alpha-D-ribose 1-diphosphate: step 3/9. The protein is Histidine biosynthesis bifunctional protein HisIE (hisI) of Buchnera aphidicola subsp. Acyrthosiphon pisum (strain APS) (Acyrthosiphon pisum symbiotic bacterium).